We begin with the raw amino-acid sequence, 168 residues long: NADH-quinone oxidoreductase subunit B (168 aa).

4 residues coordinate [4Fe-4S] cluster: cysteine 37, cysteine 38, cysteine 103, and cysteine 132.

This sequence belongs to the complex I 20 kDa subunit family. As to quaternary structure, NDH-1 is composed of 14 different subunits. Subunits NuoB, C, D, E, F, and G constitute the peripheral sector of the complex. [4Fe-4S] cluster is required as a cofactor.

Its subcellular location is the cell inner membrane. The catalysed reaction is a quinone + NADH + 5 H(+)(in) = a quinol + NAD(+) + 4 H(+)(out). Its function is as follows. NDH-1 shuttles electrons from NADH, via FMN and iron-sulfur (Fe-S) centers, to quinones in the respiratory chain. The immediate electron acceptor for the enzyme in this species is believed to be ubiquinone. Couples the redox reaction to proton translocation (for every two electrons transferred, four hydrogen ions are translocated across the cytoplasmic membrane), and thus conserves the redox energy in a proton gradient. This Campylobacter fetus subsp. fetus (strain 82-40) protein is NADH-quinone oxidoreductase subunit B.